A 174-amino-acid polypeptide reads, in one-letter code: RNA pyrophosphohydrolase (174 aa).

In terms of domain architecture, Nudix hydrolase spans 6-149 (GFRANVGIVI…KREVYRRAMK (144 aa)). The short motif at 38-59 (GGIDEGETAEQTMYRELYEEVG) is the Nudix box element.

This sequence belongs to the Nudix hydrolase family. RppH subfamily. The cofactor is a divalent metal cation.

Accelerates the degradation of transcripts by removing pyrophosphate from the 5'-end of triphosphorylated RNA, leading to a more labile monophosphorylated state that can stimulate subsequent ribonuclease cleavage. In Pseudoalteromonas atlantica (strain T6c / ATCC BAA-1087), this protein is RNA pyrophosphohydrolase.